Consider the following 64-residue polypeptide: Large ribosomal subunit protein uL30 (64 aa).

It belongs to the universal ribosomal protein uL30 family. Part of the 50S ribosomal subunit.

The protein is Large ribosomal subunit protein uL30 of Methylorubrum extorquens (strain CM4 / NCIMB 13688) (Methylobacterium extorquens).